A 280-amino-acid polypeptide reads, in one-letter code: Phosphatidylglycerol--prolipoprotein diacylglyceryl transferase (280 aa).

Transmembrane regions (helical) follow at residues 12–32 (FGPF…LIGL), 52–72 (LLPL…VAFE), 86–106 (IWEG…TLIL), and 115–133 (FWDV…QSIG). Arg-134 contributes to the a 1,2-diacyl-sn-glycero-3-phospho-(1'-sn-glycerol) binding site. Transmembrane regions (helical) follow at residues 173–193 (PTFL…ILLF), 203–223 (LPAG…RVWI), and 246–266 (IAQL…WWLY).

Belongs to the Lgt family.

The protein localises to the cell inner membrane. The enzyme catalyses L-cysteinyl-[prolipoprotein] + a 1,2-diacyl-sn-glycero-3-phospho-(1'-sn-glycerol) = an S-1,2-diacyl-sn-glyceryl-L-cysteinyl-[prolipoprotein] + sn-glycerol 1-phosphate + H(+). Its pathway is protein modification; lipoprotein biosynthesis (diacylglyceryl transfer). In terms of biological role, catalyzes the transfer of the diacylglyceryl group from phosphatidylglycerol to the sulfhydryl group of the N-terminal cysteine of a prolipoprotein, the first step in the formation of mature lipoproteins. The polypeptide is Phosphatidylglycerol--prolipoprotein diacylglyceryl transferase (Synechococcus sp. (strain CC9902)).